We begin with the raw amino-acid sequence, 726 residues long: Germacradienol/geosmin synthase (726 aa).

A germacradienol/germacrene D synthase region spans residues 2-354 (TQQPFQLPHF…TSAADVGALL (353 aa)). Residues Asp86, Glu91, Asn267, Thr271, Gln276, Asp455, Asn598, Ser602, and Glu606 each coordinate Mg(2+). The DDXXD motif 1; degenerate signature appears at 86–91 (DDHFLE). The geosmin synthase stretch occupies residues 355 to 726 (ADAVAQRARS…VPRSSPALTH (372 aa)). The short motif at 455–459 (DDYYP) is the DDXXD motif 2; degenerate element.

It belongs to the terpene synthase family. Mg(2+) is required as a cofactor.

It carries out the reaction (2E,6E)-farnesyl diphosphate + H2O = (1E,4S,5E,7R)-germacra-1(10),5-dien-11-ol + diphosphate. The catalysed reaction is (1E,4S,5E,7R)-germacra-1(10),5-dien-11-ol + H2O = (-)-geosmin + acetone. The enzyme catalyses (2E,6E)-farnesyl diphosphate = (-)-germacrene D + diphosphate. It participates in secondary metabolite biosynthesis; geosmin biosynthesis. Its pathway is sesquiterpene biosynthesis; germacradienol biosynthesis; germacradienol from farnesyl diphosphate: step 1/1. The protein operates within sesquiterpene biosynthesis; germacrene D biosynthesis; germacrene D from farnesyl diphosphate: step 1/1. Tow-domain protein where the N-terminal domain catalyzes the cyclization of farnesyl diphosphate (FPP) to a 85:15 mixture of the sesquiterpene alcohol germacradienol and the sesquiterpene hydrocarbon germacrene D. The C-terminal domain partially converts the germacradienol formed into geosmin, the characteristic odoriferous ('earthy aroma') constituent of Streptomyces species. This Streptomyces coelicolor (strain ATCC BAA-471 / A3(2) / M145) protein is Germacradienol/geosmin synthase (cyc2).